The following is a 351-amino-acid chain: Divinyl chlorophyll a/b light-harvesting protein PcbC (351 aa).

6 consecutive transmembrane segments (helical) span residues 27 to 47, 81 to 101, 140 to 160, 202 to 222, 242 to 262, and 309 to 329; these read FIGS…GSTL, GVWT…FSAV, FILG…VEWA, VMSG…WHIA, AVLS…AFWC, and LSNV…WHAL.

It belongs to the PsbB/PsbC family. IsiA/Pcb subfamily. In terms of assembly, the antenna complex consists of divinyl chlorophylls (a and b) and divinyl chlorophyll a/b binding proteins and binds more divinyl chlorophyll b than does the antenna complex from high-light-adapted Prochlorococcus. It depends on divinyl chlorophyll a as a cofactor. Divinyl chlorophyll b serves as cofactor.

It is found in the cellular thylakoid membrane. Its function is as follows. The antenna complex functions as a light receptor, it captures and delivers excitation energy to photosystems II and I. The Prochlorales pcb genes are not related to higher plant LHCs. This chain is Divinyl chlorophyll a/b light-harvesting protein PcbC (pcbC), found in Prochlorococcus marinus (strain NATL2A).